Reading from the N-terminus, the 339-residue chain is Ketol-acid reductoisomerase (NADP(+)) (339 aa).

The KARI N-terminal Rossmann domain maps to Met-1–Thr-182. NADP(+) contacts are provided by residues Tyr-24–Gln-27, Lys-48, Ser-51, Thr-53, and Asp-83–Gln-86. The active site involves His-108. Residue Gly-134 participates in NADP(+) binding. The 146-residue stretch at Asn-183–Ile-328 folds into the KARI C-terminal knotted domain. Residues Asp-191, Glu-195, Glu-227, and Glu-231 each contribute to the Mg(2+) site. Residue Ser-252 coordinates substrate.

The protein belongs to the ketol-acid reductoisomerase family. Requires Mg(2+) as cofactor.

The catalysed reaction is (2R)-2,3-dihydroxy-3-methylbutanoate + NADP(+) = (2S)-2-acetolactate + NADPH + H(+). It catalyses the reaction (2R,3R)-2,3-dihydroxy-3-methylpentanoate + NADP(+) = (S)-2-ethyl-2-hydroxy-3-oxobutanoate + NADPH + H(+). The protein operates within amino-acid biosynthesis; L-isoleucine biosynthesis; L-isoleucine from 2-oxobutanoate: step 2/4. Its pathway is amino-acid biosynthesis; L-valine biosynthesis; L-valine from pyruvate: step 2/4. Functionally, involved in the biosynthesis of branched-chain amino acids (BCAA). Catalyzes an alkyl-migration followed by a ketol-acid reduction of (S)-2-acetolactate (S2AL) to yield (R)-2,3-dihydroxy-isovalerate. In the isomerase reaction, S2AL is rearranged via a Mg-dependent methyl migration to produce 3-hydroxy-3-methyl-2-ketobutyrate (HMKB). In the reductase reaction, this 2-ketoacid undergoes a metal-dependent reduction by NADPH to yield (R)-2,3-dihydroxy-isovalerate. The chain is Ketol-acid reductoisomerase (NADP(+)) from Rhizobium etli (strain ATCC 51251 / DSM 11541 / JCM 21823 / NBRC 15573 / CFN 42).